A 759-amino-acid polypeptide reads, in one-letter code: Cullin-4A (759 aa).

Lysine 8 is covalently cross-linked (Glycyl lysine isopeptide (Lys-Gly) (interchain with G-Cter in SUMO2)). Serine 10 is subject to Phosphoserine. Residue lysine 33 forms a Glycyl lysine isopeptide (Lys-Gly) (interchain with G-Cter in ubiquitin) linkage. Residues 691-751 (DRQYQIDAAI…RDYMERDKDN (61 aa)) form the Cullin neddylation domain. A Glycyl lysine isopeptide (Lys-Gly) (interchain with G-Cter in NEDD8) cross-link involves residue lysine 705.

This sequence belongs to the cullin family. Can self-associate. Component of multiple DCX (DDB1-CUL4-X-box) E3 ubiquitin-protein ligase complexes that seem to consist of DDB1, CUL4A or CUL4B, RBX1 and a variable substrate recognition component which seems to belong to a protein family described as DCAF (Ddb1- and Cul4-associated factor) or CDW (CUL4-DDB1-associated WD40-repeat) proteins. Component of the CSA complex (DCX(ERCC8) complex) containing ERCC8, RBX1, DDB1 and CUL4A; the CSA complex interacts with RNA polymerase II; upon UV irradiation it interacts with the COP9 signalosome and preferentially with the hyperphosphorylated form of RNA polymerase II. Component of the DCX(DET1-COP1) complex with the substrate recognition component DET1 and COP1. Component of the DCX(DDB2) complex with the substrate recognition component DDB2. Component of the DCX(DTL) complex with the putative substrate recognition component DTL. Component of DCX complexes part of the DesCEND (destruction via C-end degrons) pathway, which contain either TRPC4AP or DCAF12 as substrate-recognition component. Component of the DCX(AMBRA1) complex with the substrate recognition component AMBRA1. Interacts with DDB1, RBX1, RNF7, CDT1, TIP120A/CAND1, SKP2, CDKN1B, MDM2, TP53 and HOXA9. Interacts with DDB2; the interactions with DDB2 and CAND1 are mutually exclusive. Interacts with DCAF1, DTL, DDA1, DCAF6, DCAF4, DCAF16, DCAF17, DET1, WDTC1, DCAF5, DCAF11, WDR24A, COP1, PAFAH1B1, ERCC8, GRWD1, FBXW5, RBBP7, GNB2, WSB1, WSB2, NUP43, PWP1, FBXW8, ATG16L1, KATNB1, RBBP4, RBBP5, LRWD1 and DCAF8. May interact with WDR26, WDR51B, SNRNP40, WDR61, WDR76, WDR5. Interacts (when neddylated) with ARIH1; leading to activate the E3 ligase activity of ARIH1. The DDB1-CUL4A complex interacts with CRY1. Interacts (unneddylated form) with DCUN1D1, DCUN1D2, DCUN1D3, DCUN1D4 and DCUN1D5; these interactions promote the cullin neddylation. As to quaternary structure, (Microbial infection) Interacts with Epstein-Barr virus BPLF1. Neddylated; required for activity of cullin-RING-based E3 ubiquitin-protein ligase complexes. Deneddylated via its interaction with the COP9 signalosome (CSN) complex. Post-translationally, (Microbial infection) Deneddylated by Epstein-Barr virus BPLF1 leading to a S-phase-like environment that is required for efficient replication of the viral genome.

Its pathway is protein modification; protein ubiquitination. Core component of multiple cullin-RING-based E3 ubiquitin-protein ligase complexes which mediate the ubiquitination of target proteins. As a scaffold protein may contribute to catalysis through positioning of the substrate and the ubiquitin-conjugating enzyme. The E3 ubiquitin-protein ligase activity of the complex is dependent on the neddylation of the cullin subunit and is inhibited by the association of the deneddylated cullin subunit with TIP120A/CAND1. The functional specificity of the E3 ubiquitin-protein ligase complex depends on the variable substrate recognition component. DCX(DET1-COP1) directs ubiquitination of JUN. DCX(DDB2) directs ubiquitination of XPC. DCX(DDB2) ubiquitinates histones H3-H4 and is required for efficient histone deposition during replication-coupled (H3.1) and replication-independent (H3.3) nucleosome assembly, probably by facilitating the transfer of H3 from ASF1A/ASF1B to other chaperones involved in histone deposition. DCX(DTL) plays a role in PCNA-dependent polyubiquitination of CDT1 and MDM2-dependent ubiquitination of p53/TP53 in response to radiation-induced DNA damage and during DNA replication. DCX(DTL) directs autoubiquitination of DTL. In association with DDB1 and SKP2 probably is involved in ubiquitination of CDKN1B/p27kip. Is involved in ubiquitination of HOXA9. The DDB1-CUL4A-DTL E3 ligase complex regulates the circadian clock function by mediating the ubiquitination and degradation of CRY1. The DCX(ERCC8) complex (also named CSA complex) plays a role in transcription-coupled repair (TCR). A number of DCX complexes (containing either TRPC4AP or DCAF12 as substrate-recognition component) are part of the DesCEND (destruction via C-end degrons) pathway, which recognizes a C-degron located at the extreme C terminus of target proteins, leading to their ubiquitination and degradation. The DCX(AMBRA1) complex is a master regulator of the transition from G1 to S cell phase by mediating ubiquitination of phosphorylated cyclin-D (CCND1, CCND2 and CCND3). The DCX(AMBRA1) complex also acts as a regulator of Cul5-RING (CRL5) E3 ubiquitin-protein ligase complexes by mediating ubiquitination and degradation of Elongin-C (ELOC) component of CRL5 complexes. With CUL4B, contributes to ribosome biogenesis. In Homo sapiens (Human), this protein is Cullin-4A.